A 145-amino-acid chain; its full sequence is uncharacterized protein (145 aa).

The segment at Leu62–Gly145 is disordered. Residues Ala84 to Pro95 show a composition bias toward pro residues.

This is an uncharacterized protein from Homo sapiens (Human).